A 370-amino-acid polypeptide reads, in one-letter code: Notoamide biosynthesis cluster protein J (370 aa).

The first 22 residues, 1–22 (MRIMSIMLHLLATILLSSAVSA), serve as a signal peptide directing secretion. N-linked (GlcNAc...) asparagine glycosylation is found at asparagine 159, asparagine 167, asparagine 192, asparagine 235, asparagine 282, asparagine 340, and asparagine 346.

Part of the gene cluster that mediates the biosynthesis of notoamide, a fungal indole alkaloid that belongs to a family of natural products containing a characteristic bicyclo[2.2.2]diazaoctane core. The first step of notoamide biosynthesis involves coupling of L-proline and L-tryptophan by the bimodular NRPS notE, to produce cyclo-L-tryptophan-L-proline called brevianamide F. The reverse prenyltransferase notF then acts as a deoxybrevianamide E synthase and converts brevianamide F to deoxybrevianamide E via reverse prenylation at C-2 of the indole ring leading to the bicyclo[2.2.2]diazaoctane core. Deoxybrevianamide E is further hydroxylated at C-6 of the indole ring, likely catalyzed by the cytochrome P450 monooxygenase notG, to yield 6-hydroxy-deoxybrevianamide E. 6-hydroxy-deoxybrevianamide E is a specific substrate of the prenyltransferase notC for normal prenylation at C-7 to produce 6-hydroxy-7-prenyl-deoxybrevianamide, also called notoamide S. As the proposed pivotal branching point in notoamide biosynthesis, notoamide S can be diverted to notoamide E through an oxidative pyran ring closure putatively catalyzed by either notH cytochrome P450 monooxygenase or the notD FAD-linked oxidoreductase. This step would be followed by an indole 2,3-epoxidation-initiated pinacol-like rearrangement catalyzed by the notB FAD-dependent monooxygenase leading to the formation of notoamide C and notoamide D. On the other hand notoamide S is converted to notoamide T by notH (or notD), a bifunctional oxidase that also functions as the intramolecular Diels-Alderase responsible for generation of (+)-notoamide T. To generate antipodal (-)-notoaminide T, notH' (or notD') in Aspergillus versicolor is expected to catalyze a Diels-Alder reaction leading to the opposite stereochemistry. The remaining oxidoreductase notD (or notH) likely catalyzes the oxidative pyran ring formation to yield (+)-stephacidin A. The FAD-dependent monooxygenase notI is highly similar to notB and is predicted to catalyze a similar conversion from (+)-stephacidin A to (-)-notoamide B via the 2,3-epoxidation of (+)-stephacidin A followed by a pinacol-type rearrangement. Finally, it remains unclear which enzyme could be responsible for the final hydroxylation steps leading to notoamide A and sclerotiamide. The function of notJ in the notoamide biosynthesis has not been determined yet. The sequence is that of Notoamide biosynthesis cluster protein J from Aspergillus sp. (strain MF297-2).